The sequence spans 794 residues: Interphotoreceptor matrix proteoglycan 1 (794 aa).

The first 20 residues, 1–20 (MHLEAARVIFFLWIFLQVQG), serve as a signal peptide directing secretion. The segment covering 202–213 (MTTAQRNPQLHP) has biased composition (polar residues). Disordered stretches follow at residues 202–221 (MTTA…RVPT), 314–355 (KGKA…LYPT), and 413–449 (SPEL…AMTS). Residues 236 to 357 (LEQKVELSIS…KQRELYPTAS (122 aa)) enclose the SEA 1 domain. A compositionally biased stretch (basic and acidic residues) spans 332 to 351 (NKIESEGDPRGTTEEEKQRE). Threonine 425 and threonine 439 each carry an O-linked (GalNAc...) threonine glycan. A glycan (O-linked (GalNAc...) serine) is linked at serine 443. O-linked (GalNAc...) threonine glycans are attached at residues threonine 448 and threonine 450. The region spanning 579-692 (RELVVFFSLR…YSLDVEPADQ (114 aa)) is the SEA 2 domain. A glycan (N-linked (GlcNAc...) asparagine) is linked at asparagine 624. Residues 629–637 (KQLEILNFR) carry the Heparin- and hyaluronan-binding motif. Residue asparagine 656 is glycosylated (N-linked (GlcNAc...) asparagine).

Highly glycosylated (N- and O-linked carbohydrates and sialic acid).

The protein localises to the cell projection. It is found in the cilium. It localises to the photoreceptor outer segment. Its subcellular location is the secreted. The protein resides in the extracellular space. The protein localises to the extracellular matrix. It is found in the interphotoreceptor matrix. It localises to the photoreceptor inner segment. In terms of biological role, chondroitin sulfate-, heparin- and hyaluronan-binding protein. May serve to form a basic macromolecular scaffold comprising the insoluble interphotoreceptor matrix. This Bos taurus (Bovine) protein is Interphotoreceptor matrix proteoglycan 1 (IMPG1).